A 277-amino-acid polypeptide reads, in one-letter code: Carbonyl reductase [NADPH] 1 (277 aa).

S2 bears the N-acetylserine mark. Residues S2 and S30 each carry the phosphoserine modification. Residues 10 to 34 (VTGA…GDVV), 63 to 64 (DI), and N90 contribute to the NADP(+) site. Glutathione-binding positions include 95 to 97 (FKT) and Q106. S140 provides a ligand contact to substrate. 193 to 194 (AY) contacts glutathione. The active-site Proton acceptor is Y194. NADP(+) is bound by residues 194–198 (YGVTK) and 231–233 (VRT). K239 is subject to N6-1-carboxyethyl lysine.

The protein belongs to the short-chain dehydrogenases/reductases (SDR) family. Monomer.

The protein localises to the cytoplasm. It carries out the reaction a secondary alcohol + NADP(+) = a ketone + NADPH + H(+). The enzyme catalyses prostaglandin F2alpha + NADP(+) = prostaglandin E2 + NADPH + H(+). The catalysed reaction is prostaglandin E1 + NADP(+) = 15-oxoprostaglandin E1 + NADPH + H(+). It catalyses the reaction menadione + NADPH + H(+) = menadiol + NADP(+). It carries out the reaction prostaglandin D2 + NADP(+) = 15-oxoprostaglandin D2 + NADPH + H(+). The enzyme catalyses prostaglandin E2 + NADP(+) = 15-oxoprostaglandin E2 + NADPH + H(+). The catalysed reaction is prostaglandin F2alpha + NADP(+) = 15-oxoprostaglandin F2alpha + NADPH + H(+). It catalyses the reaction daunorubicin + NADPH + H(+) = 13-dihydrodaunorubicin + NADP(+). It carries out the reaction S-nitrosoglutathione + NADPH + H(+) = S-(hydroxysulfenamide)glutathione + NADP(+). The enzyme catalyses a primary alcohol + NADP(+) = an aldehyde + NADPH + H(+). The catalysed reaction is cortisol + NADPH + H(+) = 20beta-dihydrocortisol + NADP(+). It catalyses the reaction corticosterone + NADPH + H(+) = 20beta-dihydrocorticosterone + NADP(+). Functionally, NADPH-dependent reductase with broad substrate specificity. Catalyzes the reduction of a wide variety of carbonyl compounds including quinones, prostaglandins, menadione, plus various xenobiotics. Catalyzes the reduction of the antitumor anthracyclines doxorubicin and daunorubicin to the cardiotoxic compounds doxorubicinol and daunorubicinol. Can convert prostaglandin E to prostaglandin F2-alpha. Can bind glutathione, which explains its higher affinity for glutathione-conjugated substrates. Catalyzes the reduction of S-nitrosoglutathione. In addition, participates in the glucocorticoid metabolism by catalyzing the NADPH-dependent cortisol/corticosterone into 20beta-dihydrocortisol (20b-DHF) or 20beta-corticosterone (20b-DHB), which are weak agonists of NR3C1 and NR3C2 in adipose tissue. This is Carbonyl reductase [NADPH] 1 from Bos taurus (Bovine).